The chain runs to 976 residues: Leucine--tRNA ligase (976 aa).

Residues M1–V23 show a composition bias toward low complexity. Positions M1–R34 are disordered. Residues P86–H97 carry the 'HIGH' region motif. Positions K745–S749 match the 'KMSKS' region motif. Residue K748 coordinates ATP.

The protein belongs to the class-I aminoacyl-tRNA synthetase family.

The protein localises to the cytoplasm. The enzyme catalyses tRNA(Leu) + L-leucine + ATP = L-leucyl-tRNA(Leu) + AMP + diphosphate. This Mycobacterium ulcerans (strain Agy99) protein is Leucine--tRNA ligase.